Here is a 113-residue protein sequence, read N- to C-terminus: Chaperone protein SigE (113 aa).

The protein belongs to the IpgE/SigE chaperone family. Homodimer or higher-order oligomers.

It localises to the cytoplasm. In terms of biological role, molecular chaperone required for SopB/SigD stabilization and secretion. This is Chaperone protein SigE (sigE) from Salmonella paratyphi A (strain ATCC 9150 / SARB42).